The following is a 363-amino-acid chain: Cell division cycle-associated protein 3 (363 aa).

The segment covering 1 to 12 has biased composition (polar residues); that stretch reads MGSAESKAQVTP. 4 disordered regions span residues 1–81, 126–152, 191–210, and 231–363; these read MGSA…TPLR, VESQTAPPAGEHVNDHEVEPSVEKAET, MNDQEESPIAETMNDQEESP, and ENLN…HSNS. The tract at residues 93–152 is F-box-like; it reads KQLSEVFVAEDSSTEGGPLGFTGPEATNLERQVVESQTAPPAGEHVNDHEVEPSVEKAET. Residues 137–152 show a composition bias toward basic and acidic residues; sequence HVNDHEVEPSVEKAET. Residues 192 to 210 are compositionally biased toward acidic residues; that stretch reads NDQEESPIAETMNDQEESP. Residues 259 to 285 are compositionally biased toward polar residues; sequence SVVSTESTQATGQQQKTRGKSPRSSGV. A compositionally biased stretch (low complexity) spans 296-308; it reads LLSSSSGRSPLRI. Residues 311–321 show a composition bias toward polar residues; sequence EDNSPNTNTQH. Positions 353 to 355 match the KEN box motif; the sequence is KEN.

Interacts with wee1, when wee1 is phosphorylated at 'Ser-38'. Post-translationally, phosphorylated. In terms of processing, ubiquitinated and degraded by the APC/C-Cdh1 complex during G1 phase.

Its subcellular location is the cytoplasm. It localises to the cytosol. It functions in the pathway protein modification; protein ubiquitination. F-box-like protein which is required for entry into mitosis. Acts by participating in E3 ligase complexes that mediate the ubiquitination and degradation of WEE1 kinase at G2/M phase. The chain is Cell division cycle-associated protein 3 (cdca3) from Xenopus laevis (African clawed frog).